A 273-amino-acid polypeptide reads, in one-letter code: Ribosomal RNA small subunit methyltransferase A (273 aa).

Positions 18, 20, 45, 66, 91, and 113 each coordinate S-adenosyl-L-methionine.

Belongs to the class I-like SAM-binding methyltransferase superfamily. rRNA adenine N(6)-methyltransferase family. RsmA subfamily.

It is found in the cytoplasm. It catalyses the reaction adenosine(1518)/adenosine(1519) in 16S rRNA + 4 S-adenosyl-L-methionine = N(6)-dimethyladenosine(1518)/N(6)-dimethyladenosine(1519) in 16S rRNA + 4 S-adenosyl-L-homocysteine + 4 H(+). Functionally, specifically dimethylates two adjacent adenosines (A1518 and A1519) in the loop of a conserved hairpin near the 3'-end of 16S rRNA in the 30S particle. May play a critical role in biogenesis of 30S subunits. This Klebsiella pneumoniae subsp. pneumoniae (strain ATCC 700721 / MGH 78578) protein is Ribosomal RNA small subunit methyltransferase A.